A 161-amino-acid chain; its full sequence is Putative pre-16S rRNA nuclease (161 aa).

The protein belongs to the YqgF nuclease family.

It localises to the cytoplasm. Functionally, could be a nuclease involved in processing of the 5'-end of pre-16S rRNA. The polypeptide is Putative pre-16S rRNA nuclease (Bradyrhizobium sp. (strain ORS 278)).